We begin with the raw amino-acid sequence, 275 residues long: Dermonecrotic toxin LamSicTox-alphaIV1ii (275 aa).

Residue H5 is part of the active site. Positions 25 and 27 each coordinate Mg(2+). H41 serves as the catalytic Nucleophile. 2 disulfides stabilise this stretch: C45/C51 and C47/C192. D85 contacts Mg(2+).

The protein belongs to the arthropod phospholipase D family. Class II subfamily. The cofactor is Mg(2+). As to expression, expressed by the venom gland.

It is found in the secreted. It carries out the reaction an N-(acyl)-sphingosylphosphocholine = an N-(acyl)-sphingosyl-1,3-cyclic phosphate + choline. The catalysed reaction is an N-(acyl)-sphingosylphosphoethanolamine = an N-(acyl)-sphingosyl-1,3-cyclic phosphate + ethanolamine. It catalyses the reaction a 1-acyl-sn-glycero-3-phosphocholine = a 1-acyl-sn-glycero-2,3-cyclic phosphate + choline. The enzyme catalyses a 1-acyl-sn-glycero-3-phosphoethanolamine = a 1-acyl-sn-glycero-2,3-cyclic phosphate + ethanolamine. Functionally, dermonecrotic toxins cleave the phosphodiester linkage between the phosphate and headgroup of certain phospholipids (sphingolipid and lysolipid substrates), forming an alcohol (often choline) and a cyclic phosphate. This toxin acts on sphingomyelin (SM). It may also act on ceramide phosphoethanolamine (CPE), lysophosphatidylcholine (LPC) and lysophosphatidylethanolamine (LPE), but not on lysophosphatidylserine (LPS), and lysophosphatidylglycerol (LPG). It acts by transphosphatidylation, releasing exclusively cyclic phosphate products as second products. Induces dermonecrosis, hemolysis, increased vascular permeability, edema, inflammatory response, and platelet aggregation. This chain is Dermonecrotic toxin LamSicTox-alphaIV1ii, found in Loxosceles amazonica (Recluse spider).